Reading from the N-terminus, the 89-residue chain is Double-stranded DNA-binding protein (89 aa).

As to quaternary structure, homodimer.

In terms of biological role, may play a role in transcription of several T4 genes. Binds double-stranded DNA and interacts preferentially with T4 late promoter regions. This Enterobacteria phage T4 (Bacteriophage T4) protein is Double-stranded DNA-binding protein (dsbA).